The following is a 225-amino-acid chain: 2-C-methyl-D-erythritol 4-phosphate cytidylyltransferase (225 aa).

This sequence belongs to the IspD/TarI cytidylyltransferase family. IspD subfamily.

The catalysed reaction is 2-C-methyl-D-erythritol 4-phosphate + CTP + H(+) = 4-CDP-2-C-methyl-D-erythritol + diphosphate. It participates in isoprenoid biosynthesis; isopentenyl diphosphate biosynthesis via DXP pathway; isopentenyl diphosphate from 1-deoxy-D-xylulose 5-phosphate: step 2/6. In terms of biological role, catalyzes the formation of 4-diphosphocytidyl-2-C-methyl-D-erythritol from CTP and 2-C-methyl-D-erythritol 4-phosphate (MEP). In Cereibacter sphaeroides (strain ATCC 17023 / DSM 158 / JCM 6121 / CCUG 31486 / LMG 2827 / NBRC 12203 / NCIMB 8253 / ATH 2.4.1.) (Rhodobacter sphaeroides), this protein is 2-C-methyl-D-erythritol 4-phosphate cytidylyltransferase.